The following is a 787-amino-acid chain: Mitochondrial intermediate peptidase (787 aa).

The transit peptide at 1-36 (MQNKVLRGILFKNVPLGYSYNRSIRHPTFGNSIIRW) directs the protein to the mitochondrion. His-573 lines the Zn(2+) pocket. Glu-574 is a catalytic residue. Residues His-577 and His-580 each coordinate Zn(2+).

It belongs to the peptidase M3 family. Requires Zn(2+) as cofactor.

The protein resides in the mitochondrion matrix. The enzyme catalyses Release of an N-terminal octapeptide as second stage of processing of some proteins imported into the mitochondrion.. Cleaves proteins, imported into the mitochondrion, to their mature size. While most mitochondrial precursor proteins are processed to the mature form in one step by mitochondrial processing peptidase (MPP), the sequential cleavage by MIP of an octapeptide after initial processing by MPP is a required step for a subgroup of nuclear-encoded precursor proteins destined for the matrix or the inner membrane. The polypeptide is Mitochondrial intermediate peptidase (OCT1) (Vanderwaltozyma polyspora (strain ATCC 22028 / DSM 70294 / BCRC 21397 / CBS 2163 / NBRC 10782 / NRRL Y-8283 / UCD 57-17) (Kluyveromyces polysporus)).